We begin with the raw amino-acid sequence, 330 residues long: Tryptophan--tRNA ligase (330 aa).

ATP-binding positions include 9–11 and 17–18; these read QPT and GN. Residues 10 to 18 carry the 'HIGH' region motif; sequence PTGDPHIGN. Asp-136 contributes to the L-tryptophan binding site. ATP-binding positions include 148-150, Ile-187, and 195-199; these read GED and KMSKS. A 'KMSKS' region motif is present at residues 195 to 199; the sequence is KMSKS.

Belongs to the class-I aminoacyl-tRNA synthetase family. As to quaternary structure, homodimer.

The protein localises to the cytoplasm. It carries out the reaction tRNA(Trp) + L-tryptophan + ATP = L-tryptophyl-tRNA(Trp) + AMP + diphosphate + H(+). Its function is as follows. Catalyzes the attachment of tryptophan to tRNA(Trp). The chain is Tryptophan--tRNA ligase from Deinococcus radiodurans (strain ATCC 13939 / DSM 20539 / JCM 16871 / CCUG 27074 / LMG 4051 / NBRC 15346 / NCIMB 9279 / VKM B-1422 / R1).